Reading from the N-terminus, the 59-residue chain is Large ribosomal subunit protein bL32 (59 aa).

Positions 1–59 (MAVQQNKKSPSKRGMHRSHDALTAPALFVDSTTGEVHRPHHISPNGMYRGRKVVKAKGE) are disordered. Basic residues predominate over residues 49-59 (RGRKVVKAKGE).

Belongs to the bacterial ribosomal protein bL32 family.

The protein is Large ribosomal subunit protein bL32 of Neisseria gonorrhoeae (strain ATCC 700825 / FA 1090).